The sequence spans 132 residues: NADPH-dependent 7-cyano-7-deazaguanine reductase (132 aa).

The Thioimide intermediate role is filled by cysteine 34. The active-site Proton donor is the aspartate 41. Residues 56–58 and 75–76 each bind substrate; these read IEL and HE.

It belongs to the GTP cyclohydrolase I family. QueF type 1 subfamily.

Its subcellular location is the cytoplasm. The enzyme catalyses 7-aminomethyl-7-carbaguanine + 2 NADP(+) = 7-cyano-7-deazaguanine + 2 NADPH + 3 H(+). The protein operates within tRNA modification; tRNA-queuosine biosynthesis. In terms of biological role, catalyzes the NADPH-dependent reduction of 7-cyano-7-deazaguanine (preQ0) to 7-aminomethyl-7-deazaguanine (preQ1). The polypeptide is NADPH-dependent 7-cyano-7-deazaguanine reductase (Vesicomyosocius okutanii subsp. Calyptogena okutanii (strain HA)).